Reading from the N-terminus, the 378-residue chain is Queuine tRNA-ribosyltransferase (378 aa).

Aspartate 89 serves as the catalytic Proton acceptor. Residues 89 to 93, aspartate 143, glutamine 187, and glycine 214 each bind substrate; that span reads DSGGF. Residues 245–251 are RNA binding; that stretch reads GVGKPED. Aspartate 264 functions as the Nucleophile in the catalytic mechanism. The interval 269-273 is RNA binding; important for wobble base 34 recognition; sequence TRNAR. Residues cysteine 302, cysteine 304, cysteine 307, and histidine 333 each coordinate Zn(2+).

This sequence belongs to the queuine tRNA-ribosyltransferase family. Homodimer. Within each dimer, one monomer is responsible for RNA recognition and catalysis, while the other monomer binds to the replacement base PreQ1. Requires Zn(2+) as cofactor.

The enzyme catalyses 7-aminomethyl-7-carbaguanine + guanosine(34) in tRNA = 7-aminomethyl-7-carbaguanosine(34) in tRNA + guanine. It functions in the pathway tRNA modification; tRNA-queuosine biosynthesis. Its function is as follows. Catalyzes the base-exchange of a guanine (G) residue with the queuine precursor 7-aminomethyl-7-deazaguanine (PreQ1) at position 34 (anticodon wobble position) in tRNAs with GU(N) anticodons (tRNA-Asp, -Asn, -His and -Tyr). Catalysis occurs through a double-displacement mechanism. The nucleophile active site attacks the C1' of nucleotide 34 to detach the guanine base from the RNA, forming a covalent enzyme-RNA intermediate. The proton acceptor active site deprotonates the incoming PreQ1, allowing a nucleophilic attack on the C1' of the ribose to form the product. After dissociation, two additional enzymatic reactions on the tRNA convert PreQ1 to queuine (Q), resulting in the hypermodified nucleoside queuosine (7-(((4,5-cis-dihydroxy-2-cyclopenten-1-yl)amino)methyl)-7-deazaguanosine). The sequence is that of Queuine tRNA-ribosyltransferase from Yersinia enterocolitica serotype O:8 / biotype 1B (strain NCTC 13174 / 8081).